The sequence spans 78 residues: ATP synthase subunit c (78 aa).

The next 2 membrane-spanning stretches (helical) occupy residues 12–32 and 54–74; these read IGAG…GHVV and FIGI…ALLL.

Belongs to the ATPase C chain family. As to quaternary structure, F-type ATPases have 2 components, F(1) - the catalytic core - and F(0) - the membrane proton channel. F(1) has five subunits: alpha(3), beta(3), gamma(1), delta(1), epsilon(1). F(0) has four main subunits: a(1), b(1), b'(1) and c(10-14). The alpha and beta chains form an alternating ring which encloses part of the gamma chain. F(1) is attached to F(0) by a central stalk formed by the gamma and epsilon chains, while a peripheral stalk is formed by the delta, b and b' chains.

It localises to the cellular chromatophore membrane. In terms of biological role, f(1)F(0) ATP synthase produces ATP from ADP in the presence of a proton or sodium gradient. F-type ATPases consist of two structural domains, F(1) containing the extramembraneous catalytic core and F(0) containing the membrane proton channel, linked together by a central stalk and a peripheral stalk. During catalysis, ATP synthesis in the catalytic domain of F(1) is coupled via a rotary mechanism of the central stalk subunits to proton translocation. Its function is as follows. Key component of the F(0) channel; it plays a direct role in translocation across the membrane. A homomeric c-ring of between 10-14 subunits forms the central stalk rotor element with the F(1) delta and epsilon subunits. This Rhodobacter capsulatus (Rhodopseudomonas capsulata) protein is ATP synthase subunit c.